A 341-amino-acid chain; its full sequence is DNA-directed RNA polymerase subunit alpha (341 aa).

An alpha N-terminal domain (alpha-NTD) region spans residues 1–237 (MLSLSKNWNA…EQLQLFISFE (237 aa)). The segment at 247-341 (TDALPFSPYL…LSKRYEDSYN (95 aa)) is alpha C-terminal domain (alpha-CTD).

It belongs to the RNA polymerase alpha chain family. As to quaternary structure, homodimer. The RNAP catalytic core consists of 2 alpha, 1 beta, 1 beta' and 1 omega subunit. When a sigma factor is associated with the core the holoenzyme is formed, which can initiate transcription.

It catalyses the reaction RNA(n) + a ribonucleoside 5'-triphosphate = RNA(n+1) + diphosphate. In terms of biological role, DNA-dependent RNA polymerase catalyzes the transcription of DNA into RNA using the four ribonucleoside triphosphates as substrates. The sequence is that of DNA-directed RNA polymerase subunit alpha from Rickettsia bellii (strain RML369-C).